Consider the following 707-residue polypeptide: Heat shock protein hsp88 (707 aa).

Residues 662–692 show a composition bias toward basic and acidic residues; sequence EAEKAAKKAEEEARKAKEAAEKAAQEGAKDD. The segment at 662 to 707 is disordered; the sequence is EAEKAAKKAEEEARKAKEAAEKAAQEGAKDDEMTDADAPKPVVEEA.

This sequence belongs to the heat shock protein 70 family. Binds hsp30 independent of temperature or substrate. The N-terminus is blocked.

The protein localises to the cytoplasm. This chain is Heat shock protein hsp88 (hsp88), found in Neurospora crassa (strain ATCC 24698 / 74-OR23-1A / CBS 708.71 / DSM 1257 / FGSC 987).